Here is a 276-residue protein sequence, read N- to C-terminus: Putative pyridoxine kinase (276 aa).

Residue Asn139 participates in ATP binding. Glu142 is a binding site for Mg(2+). ATP is bound by residues 176-180, Asp188, Gly213, and Lys238; that span reads KGGKA.

This sequence belongs to the ThiD family.

It carries out the reaction pyridoxal + ATP = pyridoxal 5'-phosphate + ADP + H(+). Its function is as follows. Phosphorylates B6 vitamers; functions in a salvage pathway. Uses pyridoxal, pyridoxine, and pyridoxamine as substrates. The sequence is that of Putative pyridoxine kinase (pdxK) from Staphylococcus epidermidis (strain ATCC 35984 / DSM 28319 / BCRC 17069 / CCUG 31568 / BM 3577 / RP62A).